A 624-amino-acid chain; its full sequence is DNA-directed RNA polymerase III subunit rpc-3 (624 aa).

Disordered regions lie at residues 229-260 (KRKL…EEDL) and 373-418 (LAPK…ARMS). The span at 385-403 (DDSDDDEEDGDYSDSDEEM) shows a compositional bias: acidic residues. Residues 551–572 (CYATMVHCLQVLEVRRQKDKDV) are leucine-zipper.

This sequence belongs to the RNA polymerase beta chain family. In terms of assembly, component of the RNA polymerase III (Pol III) complex consisting of 17 subunits.

Its subcellular location is the nucleus. Functionally, DNA-dependent RNA polymerase catalyzes the transcription of DNA into RNA using the four ribonucleoside triphosphates as substrates. Specific core component of RNA polymerase III which synthesizes small RNAs, such as 5S rRNA and tRNAs. The protein is DNA-directed RNA polymerase III subunit rpc-3 (rpc-82) of Neurospora crassa (strain ATCC 24698 / 74-OR23-1A / CBS 708.71 / DSM 1257 / FGSC 987).